We begin with the raw amino-acid sequence, 459 residues long: Ribulose bisphosphate carboxylase (459 aa).

Asn-111 contacts substrate. The Proton acceptor role is filled by Lys-166. Residue Lys-168 coordinates substrate. Mg(2+) contacts are provided by Lys-191, Asp-193, and Glu-194. Lys-191 carries the N6-carboxylysine modification. Residue His-287 is the Proton acceptor of the active site. Residues Arg-288, His-321, and Ser-368 each coordinate substrate.

Belongs to the RuBisCO large chain family. Type II subfamily. As to quaternary structure, homodimer. Mg(2+) is required as a cofactor.

The catalysed reaction is 2 (2R)-3-phosphoglycerate + 2 H(+) = D-ribulose 1,5-bisphosphate + CO2 + H2O. It catalyses the reaction D-ribulose 1,5-bisphosphate + O2 = 2-phosphoglycolate + (2R)-3-phosphoglycerate + 2 H(+). Its function is as follows. RuBisCO catalyzes two reactions: the carboxylation of D-ribulose 1,5-bisphosphate, the primary event in carbon dioxide fixation, as well as the oxidative fragmentation of the pentose substrate. Both reactions occur simultaneously and in competition at the same active site. In Polaromonas naphthalenivorans (strain CJ2), this protein is Ribulose bisphosphate carboxylase.